A 61-amino-acid polypeptide reads, in one-letter code: Large ribosomal subunit protein bL32 (61 aa).

A compositionally biased stretch (basic residues) spans 1 to 22 (MAVPKKKTSRARRDRRRSHHAL). Positions 1–24 (MAVPKKKTSRARRDRRRSHHALRG) are disordered.

The protein belongs to the bacterial ribosomal protein bL32 family.

The chain is Large ribosomal subunit protein bL32 from Rubrobacter xylanophilus (strain DSM 9941 / JCM 11954 / NBRC 16129 / PRD-1).